A 245-amino-acid chain; its full sequence is Acetylglutamate kinase (245 aa).

Substrate is bound by residues 41–42, arginine 63, and asparagine 156; that span reads GG.

The protein belongs to the acetylglutamate kinase family. ArgB subfamily.

The protein localises to the cytoplasm. The enzyme catalyses N-acetyl-L-glutamate + ATP = N-acetyl-L-glutamyl 5-phosphate + ADP. The protein operates within amino-acid biosynthesis; L-arginine biosynthesis; N(2)-acetyl-L-ornithine from L-glutamate: step 2/4. Functionally, catalyzes the ATP-dependent phosphorylation of N-acetyl-L-glutamate. The chain is Acetylglutamate kinase from Staphylococcus epidermidis (strain ATCC 35984 / DSM 28319 / BCRC 17069 / CCUG 31568 / BM 3577 / RP62A).